A 79-amino-acid polypeptide reads, in one-letter code: Sulfur carrier protein TusA (79 aa).

The Cysteine persulfide intermediate role is filled by Cys17.

Belongs to the sulfur carrier protein TusA family.

Its subcellular location is the cytoplasm. Sulfur carrier protein which probably makes part of a sulfur-relay system. The sequence is that of Sulfur carrier protein TusA from Pasteurella multocida (strain Pm70).